Reading from the N-terminus, the 214-residue chain is Outer membrane lipoprotein MapA (214 aa).

The N-terminal stretch at 1 to 17 is a signal peptide; sequence MFKKFLIFIVPILFLSA. Cys18 carries the N-palmitoyl cysteine lipid modification. Cys18 is lipidated: S-diacylglycerol cysteine.

The protein localises to the cell outer membrane. In Campylobacter jejuni subsp. jejuni serotype O:6 (strain 81116 / NCTC 11828), this protein is Outer membrane lipoprotein MapA (mapA).